The following is a 403-amino-acid chain: S-adenosylmethionine synthase (403 aa).

ATP is bound at residue H17. A Mg(2+)-binding site is contributed by D19. E45 contributes to the K(+) binding site. L-methionine-binding residues include E58 and Q104. The tract at residues 104 to 114 (QSPDIAQGVDT) is flexible loop. Residues 179 to 181 (DGK), 250 to 251 (KF), D259, 265 to 266 (RK), A282, and K286 each bind ATP. D259 contributes to the L-methionine binding site. Residue K290 coordinates L-methionine.

The protein belongs to the AdoMet synthase family. Homotetramer; dimer of dimers. The cofactor is Mg(2+). K(+) is required as a cofactor.

Its subcellular location is the cytoplasm. The catalysed reaction is L-methionine + ATP + H2O = S-adenosyl-L-methionine + phosphate + diphosphate. The protein operates within amino-acid biosynthesis; S-adenosyl-L-methionine biosynthesis; S-adenosyl-L-methionine from L-methionine: step 1/1. In terms of biological role, catalyzes the formation of S-adenosylmethionine (AdoMet) from methionine and ATP. The overall synthetic reaction is composed of two sequential steps, AdoMet formation and the subsequent tripolyphosphate hydrolysis which occurs prior to release of AdoMet from the enzyme. This Mycobacterium bovis (strain ATCC BAA-935 / AF2122/97) protein is S-adenosylmethionine synthase.